The chain runs to 329 residues: Probable tyrosine--tRNA ligase, cytoplasmic (329 aa).

Tyr35 is a binding site for L-tyrosine. The short motif at 40 to 48 (TTGKPHIAY) is the 'HIGH' region element. L-tyrosine contacts are provided by Tyr162, Gln166, Asp169, and Gln184. A 'KMSKS' region motif is present at residues 218–222 (KMSSS).

The protein belongs to the class-I aminoacyl-tRNA synthetase family. As to quaternary structure, homodimer.

The protein localises to the cytoplasm. It carries out the reaction tRNA(Tyr) + L-tyrosine + ATP = L-tyrosyl-tRNA(Tyr) + AMP + diphosphate + H(+). This chain is Probable tyrosine--tRNA ligase, cytoplasmic, found in Vairimorpha ceranae (strain BRL01) (Microsporidian parasite).